The sequence spans 326 residues: Olfactory receptor 8A1 (326 aa).

Topologically, residues M1 to F45 are extracellular. The N-linked (GlcNAc...) asparagine glycan is linked to N22. The chain crosses the membrane as a helical span at residues L46–I66. Topologically, residues C67–Y77 are cytoplasmic. The chain crosses the membrane as a helical span at residues Y78–V100. The Extracellular portion of the chain corresponds to N101–S116. C114 and C195 are oxidised to a cystine. The helical transmembrane segment at Q117–Y137 threads the bilayer. At D138–N150 the chain is on the cytoplasmic side. The chain crosses the membrane as a helical span at residues I151–I171. Over G172–N222 the chain is Extracellular. The chain crosses the membrane as a helical span at residues I223–G243. At I244–H260 the chain is on the cytoplasmic side. Residues L261 to I281 traverse the membrane as a helical segment. Residues S282–E287 are Extracellular-facing. The chain crosses the membrane as a helical span at residues N288–L308. Residues R309–F326 are Cytoplasmic-facing.

Belongs to the G-protein coupled receptor 1 family.

It is found in the cell membrane. In terms of biological role, odorant receptor. This chain is Olfactory receptor 8A1 (OR8A1), found in Homo sapiens (Human).